Here is a 345-residue protein sequence, read N- to C-terminus: Serine/arginine-rich splicing factor 6 (345 aa).

An RRM 1 domain is found at M1–G72. 3 positions are modified to phosphoserine: S45, S81, and S84. Residues R75–Y102 are disordered. Residues F110–P183 form the RRM 2 domain. K165 is modified (N6-acetyllysine). A disordered region spans residues I176–D345. K182 is covalently cross-linked (Glycyl lysine isopeptide (Lys-Gly) (interchain with G-Cter in SUMO2)). Residues T185 to K250 are compositionally biased toward basic residues. Composition is skewed to basic and acidic residues over residues R264–R273 and S282–S293. A phosphoserine mark is found at S299 and S301. The residue at position 305 (S305) is a Phosphoserine; by DYRK1A. Phosphoserine is present on residues S316 and S318. Positions R323–D345 are enriched in basic residues.

It belongs to the splicing factor SR family. As to quaternary structure, binds SREK1/SFRS12. Interacts with DYRK1A. Extensively phosphorylated on serine residues in the RS domain. Phosphorylated by DYRK1A, probably in the RS domain. Phosphorylation by DYRK1A modulates alternative splice site selection and inhibits the expression of MAPT/Tau exon 10.

It localises to the nucleus. It is found in the nucleus speckle. Its function is as follows. Plays a role in constitutive splicing and modulates the selection of alternative splice sites. Plays a role in the alternative splicing of MAPT/Tau exon 10. Binds to alternative exons of TNC pre-mRNA and promotes the expression of alternatively spliced TNC. Plays a role in wound healing and in the regulation of keratinocyte differentiation and proliferation via its role in alternative splicing. The chain is Serine/arginine-rich splicing factor 6 (SRSF6) from Bos taurus (Bovine).